The primary structure comprises 129 residues: Flagellar assembly factor FliW (129 aa).

It belongs to the FliW family. As to quaternary structure, interacts with flagellins FlaA and FlaB but not with FlaC; recognizes glycosylated and non-glycosylated FlaA equally. Interacts with CsrA. May form a 3-way complex of flagellin, FliS and FliW simultaneously in which FliS and FliW do not directly interact.

Its subcellular location is the cytoplasm. In terms of biological role, acts as an anti-CsrA protein, binds CsrA and prevents it from repressing translation of its target genes, one of which is flagellin. Binds to flagellin and participates in the assembly of the flagellum. Its function is as follows. Overexpression leads to increased levels of FlaA and FlaB, but levels of FlaC remain stable. Involved in post-transcriptional regulation of flagellin biosynthesis. The polypeptide is Flagellar assembly factor FliW (Campylobacter jejuni subsp. jejuni serotype O:6 (strain 81116 / NCTC 11828)).